Consider the following 237-residue polypeptide: Cytosolic-abundant heat soluble protein 1 (237 aa).

Composition is skewed to basic and acidic residues over residues Met1–Gln17 and Val91–Arg105. 2 disordered regions span residues Met1 to Glu35 and Ser85 to Arg105. A coiled-coil region spans residues Lys98–Ala201. CAHS motif regions lie at residues Tyr132–Gln150 and Gln169–Glu187. The interval Ala212 to His237 is disordered. The segment covering Asp226–His237 has biased composition (basic and acidic residues).

Belongs to the Cytosolic-abundant heat soluble protein (CAHS) family.

Its subcellular location is the cytoplasm. It localises to the nucleus. Functionally, CAHS proteins are cytosolic heat soluble proteins that seem to contribute to the anhydrobiosis in tardigrades, but their specific mechanisms are yet to be identified. It is possible that protection during anhydrobiosis might occur via the stabilization of vitrifying small molecules such as sugars, but not via the direct glass transition of CAHS proteins themselves. The protein is Cytosolic-abundant heat soluble protein 1 of Ramazzottius varieornatus (Water bear).